The chain runs to 394 residues: 3-hydroxybenzoate 6-hydroxylase 1 (394 aa).

The protein belongs to the 3-hydroxybenzoate 6-hydroxylase family. Homotrimer. The cofactor is FAD.

The catalysed reaction is 3-hydroxybenzoate + NADH + O2 + H(+) = 2,5-dihydroxybenzoate + NAD(+) + H2O. Inhibited by manganese, copper, mercury, and iron ions. Its function is as follows. Catalyzes the NAD- or NADP-dependent conversion of 3-hydroxybenzoate to gentisate. The affinity of the enzyme toward NAD is twice as high as for NADP. The enzyme shows higher specific activities against the intermediates in the degradation of 2,5-xylenol and 3,5-xylenol, 3-hydroxy-4-methylbenzoate and 3-hydroxy-5-methylbenzoate, respectively, than for 3-hydroxybenzoate. It also shows activity against 3-substituted benzoates. The sequence is that of 3-hydroxybenzoate 6-hydroxylase 1 (xlnD) from Aquipseudomonas alcaligenes (Pseudomonas alcaligenes).